A 142-amino-acid chain; its full sequence is Large ribosomal subunit protein uL11 (142 aa).

Belongs to the universal ribosomal protein uL11 family. As to quaternary structure, part of the ribosomal stalk of the 50S ribosomal subunit. Interacts with L10 and the large rRNA to form the base of the stalk. L10 forms an elongated spine to which L12 dimers bind in a sequential fashion forming a multimeric L10(L12)X complex. Post-translationally, one or more lysine residues are methylated.

Functionally, forms part of the ribosomal stalk which helps the ribosome interact with GTP-bound translation factors. The chain is Large ribosomal subunit protein uL11 from Nitrobacter hamburgensis (strain DSM 10229 / NCIMB 13809 / X14).